A 431-amino-acid chain; its full sequence is 5-methylthioadenosine/S-adenosylhomocysteine deaminase (431 aa).

The Zn(2+) site is built by histidine 63 and histidine 65. 3 residues coordinate substrate: glutamate 92, arginine 144, and histidine 184. Histidine 211 is a binding site for Zn(2+). Positions 214 and 299 each coordinate substrate. A Zn(2+)-binding site is contributed by aspartate 299.

The protein belongs to the metallo-dependent hydrolases superfamily. MTA/SAH deaminase family. Zn(2+) serves as cofactor.

The catalysed reaction is S-adenosyl-L-homocysteine + H2O + H(+) = S-inosyl-L-homocysteine + NH4(+). It carries out the reaction S-methyl-5'-thioadenosine + H2O + H(+) = S-methyl-5'-thioinosine + NH4(+). In terms of biological role, catalyzes the deamination of 5-methylthioadenosine and S-adenosyl-L-homocysteine into 5-methylthioinosine and S-inosyl-L-homocysteine, respectively. Is also able to deaminate adenosine. This chain is 5-methylthioadenosine/S-adenosylhomocysteine deaminase, found in Thermoanaerobacter pseudethanolicus (strain ATCC 33223 / 39E) (Clostridium thermohydrosulfuricum).